The primary structure comprises 104 residues: Large ribosomal subunit protein bL21 (104 aa).

This sequence belongs to the bacterial ribosomal protein bL21 family. As to quaternary structure, part of the 50S ribosomal subunit. Contacts protein L20.

Functionally, this protein binds to 23S rRNA in the presence of protein L20. This chain is Large ribosomal subunit protein bL21, found in Streptococcus gordonii (strain Challis / ATCC 35105 / BCRC 15272 / CH1 / DL1 / V288).